The chain runs to 367 residues: GDSL esterase/lipase 3 (367 aa).

Positions 1-23 (MVRLVLIIFFVYTIILSIGSINC) are cleaved as a signal peptide. S42 (nucleophile) is an active-site residue. 3 N-linked (GlcNAc...) asparagine glycosylation sites follow: N175, N194, and N321. Catalysis depends on residues D329 and H332. The N-linked (GlcNAc...) asparagine glycan is linked to N351.

The protein belongs to the 'GDSL' lipolytic enzyme family.

Its subcellular location is the secreted. The sequence is that of GDSL esterase/lipase 3 (GLIP3) from Arabidopsis thaliana (Mouse-ear cress).